The following is a 184-amino-acid chain: MIKEILKKADEKMGKTIVALKRELASMKAGRANPAMLDRIEAEYYGSMTPLNQLGNISVPEARVLLIQPWDKSALSAIEKAILKSDLGLNPSNDGTVIRLVIPELTEETRKNIVKTVKKTGEEAKVAIRSIRRDCNDDVKNLKKDDVSEDDIKKAEDDIQKKTDKYIKEIDSIISAKEKEILSI.

The protein belongs to the RRF family.

Its subcellular location is the cytoplasm. In terms of biological role, responsible for the release of ribosomes from messenger RNA at the termination of protein biosynthesis. May increase the efficiency of translation by recycling ribosomes from one round of translation to another. The chain is Ribosome-recycling factor from Clostridium botulinum (strain Okra / Type B1).